Reading from the N-terminus, the 386-residue chain is Epoxyqueuosine reductase (386 aa).

Cob(II)alamin-binding positions include R57, C97, D134, 139-141 (SDR), S152, N155, I158, and L169. Residue D134 is the Proton donor of the active site. The 4Fe-4S ferredoxin-type domain occupies 178–208 (FEPDVPIEDMCGSCTKCLDACPTGALVNPGQ). Residues C188, C191, C194, C198, and C214 each contribute to the [4Fe-4S] cluster site. S216 lines the cob(II)alamin pocket. TRNA contacts are provided by Q220 and K222. [4Fe-4S] cluster-binding residues include C240, C243, and C247. 240 to 241 (CD) contributes to the cob(II)alamin binding site. Positions 280, 281, 295, 297, and 298 each coordinate tRNA. The stretch at 333–357 (RGTAAWAIGKIGDPAYAEELEKALE) is one HEAT-like PBS-type repeat.

The protein belongs to the QueG family. Monomer. Requires cob(II)alamin as cofactor. [4Fe-4S] cluster is required as a cofactor.

It is found in the cytoplasm. The catalysed reaction is epoxyqueuosine(34) in tRNA + AH2 = queuosine(34) in tRNA + A + H2O. It functions in the pathway tRNA modification; tRNA-queuosine biosynthesis. In terms of biological role, catalyzes the conversion of epoxyqueuosine (oQ) to queuosine (Q), which is a hypermodified base found in the wobble positions of tRNA(Asp), tRNA(Asn), tRNA(His) and tRNA(Tyr). The polypeptide is Epoxyqueuosine reductase (Bacillus subtilis (strain 168)).